Consider the following 400-residue polypeptide: Coenzyme A biosynthesis bifunctional protein CoaBC (400 aa).

A phosphopantothenoylcysteine decarboxylase region spans residues 1–190 (MKLNGKHIVV…SQKQDLQGLN (190 aa)). The active-site Proton donor is Cys158. Residues 191–400 (VSITAGPTRE…EIIERYQKTL (210 aa)) form a phosphopantothenate--cysteine ligase region. CTP contacts are provided by residues 273 to 275 (GCA), Asp279, Lys289, 305 to 308 (PDII), Phe324, Lys338, and Lys342.

In the N-terminal section; belongs to the HFCD (homo-oligomeric flavin containing Cys decarboxylase) superfamily. This sequence in the C-terminal section; belongs to the PPC synthetase family. It depends on Mg(2+) as a cofactor. The cofactor is FMN.

It catalyses the reaction N-[(R)-4-phosphopantothenoyl]-L-cysteine + H(+) = (R)-4'-phosphopantetheine + CO2. The catalysed reaction is (R)-4'-phosphopantothenate + L-cysteine + CTP = N-[(R)-4-phosphopantothenoyl]-L-cysteine + CMP + diphosphate + H(+). The protein operates within cofactor biosynthesis; coenzyme A biosynthesis; CoA from (R)-pantothenate: step 2/5. Its pathway is cofactor biosynthesis; coenzyme A biosynthesis; CoA from (R)-pantothenate: step 3/5. Functionally, catalyzes two sequential steps in the biosynthesis of coenzyme A. In the first step cysteine is conjugated to 4'-phosphopantothenate to form 4-phosphopantothenoylcysteine. In the second step the latter compound is decarboxylated to form 4'-phosphopantotheine. This is Coenzyme A biosynthesis bifunctional protein CoaBC from Haemophilus influenzae (strain ATCC 51907 / DSM 11121 / KW20 / Rd).